The following is a 102-amino-acid chain: RNA-binding protein Hfq (102 aa).

In terms of domain architecture, Sm spans 9–68 (DPFLNALRRERVPVSIYLVNGIKLQGQIESFDQFVILLKNTVSQMVYKHAISTVVPSRPV). Residues 63–102 (VPSRPVSHHSNNAGGGSNNYHHSNNAQPSSAASQDSEDAE) are disordered. Over residues 70–96 (HHSNNAGGGSNNYHHSNNAQPSSAASQ) the composition is skewed to low complexity.

It belongs to the Hfq family. In terms of assembly, homohexamer.

In terms of biological role, RNA chaperone that binds small regulatory RNA (sRNAs) and mRNAs to facilitate mRNA translational regulation in response to envelope stress, environmental stress and changes in metabolite concentrations. Also binds with high specificity to tRNAs. This is RNA-binding protein Hfq from Cronobacter sakazakii (strain ATCC BAA-894) (Enterobacter sakazakii).